Reading from the N-terminus, the 376-residue chain is Queuine tRNA-ribosyltransferase (376 aa).

Aspartate 93 (proton acceptor) is an active-site residue. Residues 93 to 97, aspartate 147, glutamine 190, and glycine 217 each bind substrate; that span reads DSGGF. The RNA binding stretch occupies residues 248–254; the sequence is GVGKPDD. Aspartate 267 serves as the catalytic Nucleophile. The Zn(2+) site is built by cysteine 305, cysteine 307, cysteine 310, and histidine 336.

This sequence belongs to the queuine tRNA-ribosyltransferase family. In terms of assembly, homodimer. Within each dimer, one monomer is responsible for RNA recognition and catalysis, while the other monomer binds to the replacement base PreQ1. Zn(2+) serves as cofactor.

The catalysed reaction is 7-aminomethyl-7-carbaguanine + guanosine(34) in tRNA = 7-aminomethyl-7-carbaguanosine(34) in tRNA + guanine. Its pathway is tRNA modification; tRNA-queuosine biosynthesis. Catalyzes the base-exchange of a guanine (G) residue with the queuine precursor 7-aminomethyl-7-deazaguanine (PreQ1) at position 34 (anticodon wobble position) in tRNAs with GU(N) anticodons (tRNA-Asp, -Asn, -His and -Tyr). Catalysis occurs through a double-displacement mechanism. The nucleophile active site attacks the C1' of nucleotide 34 to detach the guanine base from the RNA, forming a covalent enzyme-RNA intermediate. The proton acceptor active site deprotonates the incoming PreQ1, allowing a nucleophilic attack on the C1' of the ribose to form the product. After dissociation, two additional enzymatic reactions on the tRNA convert PreQ1 to queuine (Q), resulting in the hypermodified nucleoside queuosine (7-(((4,5-cis-dihydroxy-2-cyclopenten-1-yl)amino)methyl)-7-deazaguanosine). This Ruegeria pomeroyi (strain ATCC 700808 / DSM 15171 / DSS-3) (Silicibacter pomeroyi) protein is Queuine tRNA-ribosyltransferase.